The primary structure comprises 60 residues: Truncated protein A35 homolog (60 aa).

The protein belongs to the chordopoxvirinae A35 protein family.

This is Truncated protein A35 homolog (A38R) from Variola virus (isolate Human/India/Ind3/1967) (VARV).